The sequence spans 335 residues: Nucleoid-associated protein PC1_1634 (335 aa).

Belongs to the YejK family.

The protein resides in the cytoplasm. Its subcellular location is the nucleoid. The protein is Nucleoid-associated protein PC1_1634 of Pectobacterium carotovorum subsp. carotovorum (strain PC1).